The sequence spans 233 residues: uncharacterized protein (233 aa).

Disordered stretches follow at residues 1 to 159 (MGKH…NEKL) and 181 to 206 (MGVK…QDKM). Over residues 36 to 115 (RDRSRSPHKE…RRDDKNRLSA (80 aa)) the composition is skewed to basic and acidic residues. Over residues 135-148 (SSSSNTTDTASSSS) the composition is skewed to low complexity. A compositionally biased stretch (basic and acidic residues) spans 189 to 206 (PTDDSSRLSDEKNRQDKM).

This is an uncharacterized protein from Caenorhabditis elegans.